A 382-amino-acid polypeptide reads, in one-letter code: D-galactonate dehydratase (382 aa).

Asp-183 contributes to the Mg(2+) binding site. His-185 serves as the catalytic Proton donor. Mg(2+)-binding residues include Glu-209 and Glu-235. His-285 (proton acceptor) is an active-site residue.

The protein belongs to the mandelate racemase/muconate lactonizing enzyme family. GalD subfamily. It depends on Mg(2+) as a cofactor.

It catalyses the reaction D-galactonate = 2-dehydro-3-deoxy-D-galactonate + H2O. The protein operates within carbohydrate acid metabolism; D-galactonate degradation; D-glyceraldehyde 3-phosphate and pyruvate from D-galactonate: step 1/3. Its function is as follows. Catalyzes the dehydration of D-galactonate to 2-keto-3-deoxy-D-galactonate. This chain is D-galactonate dehydratase, found in Klebsiella pneumoniae subsp. pneumoniae (strain ATCC 700721 / MGH 78578).